The primary structure comprises 160 residues: CXXC motif containing zinc binding protein (160 aa).

4 residues coordinate Zn(2+): Cys-33, Cys-36, Cys-67, and Cys-70. Phosphoserine is present on Ser-75.

It belongs to the UPF0587 family. Monomer.

This Rattus norvegicus (Rat) protein is CXXC motif containing zinc binding protein.